An 85-amino-acid chain; its full sequence is Probable oxaloacetate decarboxylase gamma chain (85 aa).

A helical membrane pass occupies residues 11–33; it reads AATLMVTGMAVVFIFLTILVYLV.

This sequence belongs to the OadG family. As to quaternary structure, heterotrimer of an alpha, a beta and a gamma subunit. Requires Na(+) as cofactor.

Its subcellular location is the cell membrane. It catalyses the reaction oxaloacetate + 2 Na(+)(in) + H(+) = pyruvate + 2 Na(+)(out) + CO2. Functionally, catalyzes the decarboxylation of oxaloacetate coupled to Na(+) translocation. In Vibrio parahaemolyticus serotype O3:K6 (strain RIMD 2210633), this protein is Probable oxaloacetate decarboxylase gamma chain.